Here is a 156-residue protein sequence, read N- to C-terminus: Small ribosomal subunit protein uS7 (156 aa).

This sequence belongs to the universal ribosomal protein uS7 family. Part of the 30S ribosomal subunit. Contacts proteins S9 and S11.

One of the primary rRNA binding proteins, it binds directly to 16S rRNA where it nucleates assembly of the head domain of the 30S subunit. Is located at the subunit interface close to the decoding center, probably blocks exit of the E-site tRNA. In Bacillus pumilus (strain SAFR-032), this protein is Small ribosomal subunit protein uS7.